Here is a 485-residue protein sequence, read N- to C-terminus: NADH-quinone oxidoreductase subunit N (485 aa).

Transmembrane regions (helical) follow at residues 8–28 (LIALLPLLIVGLTVVVVMLSI), 35–55 (FLNATLSVIGLNAALVSLWFV), 71–91 (GFAMLYTGLVLLASLATCTFA), 105–125 (FYLLVLIAALGGILLANANHL), 127–147 (SLFLGIELISLPLFGLVGYAF), 159–179 (YTILSAAASSFLLFGMALVYA), 203–223 (LLAGFGLMIVGLGFKLSLVPF), 235–255 (PAPVSTFLATASKIAIFGVVM), 271–291 (VVLAIIAFASIIFGNLMALSQ), 297–317 (LLGYSSISHLGYLLVALIALQ), 326–346 (VGVYLVGYLFSSLGAFGVVSL), 373–393 (AAVMTVMMLSLAGIPMTLGFI), 408–430 (WWLVGAVVVGSAIGLYYYLRVAV), and 455–475 (IVVLISALLVLVLGVWPQPLI).

It belongs to the complex I subunit 2 family. NDH-1 is composed of 13 different subunits. Subunits NuoA, H, J, K, L, M, N constitute the membrane sector of the complex.

The protein localises to the cell inner membrane. The enzyme catalyses a quinone + NADH + 5 H(+)(in) = a quinol + NAD(+) + 4 H(+)(out). NDH-1 shuttles electrons from NADH, via FMN and iron-sulfur (Fe-S) centers, to quinones in the respiratory chain. The immediate electron acceptor for the enzyme in this species is believed to be ubiquinone. Couples the redox reaction to proton translocation (for every two electrons transferred, four hydrogen ions are translocated across the cytoplasmic membrane), and thus conserves the redox energy in a proton gradient. The chain is NADH-quinone oxidoreductase subunit N from Escherichia coli O81 (strain ED1a).